The sequence spans 189 residues: MFTAIDKIDRTFTVDQEFACLSSSTSSDSIGENSDDDEGGENEIESSYNGPLDMMESLEEALPIKRAISKFYKGKSKSFMSLSETSSLPVKDLTKPENLYSRRRRNLLSHRICSRGGISKKPFKSVLAMSQREGDSSSSGDDSLPTLRQHHKTLTPRLRKGSFGNCVPVVDSPRCFQTAAGRNIHNIIC.

Disordered regions lie at residues 22–49 and 128–147; these read SSSTSSDSIGENSDDDEGGENEIESSYN and AMSQREGDSSSSGDDSLPTL. The span at 33-44 shows a compositional bias: acidic residues; that stretch reads NSDDDEGGENEI.

The protein resides in the nucleus. This is Protein OXIDATIVE STRESS 3 LIKE 2 from Arabidopsis thaliana (Mouse-ear cress).